A 309-amino-acid polypeptide reads, in one-letter code: Coproporphyrin III ferrochelatase (309 aa).

Residues tyrosine 12, arginine 29, 45-46 (RY), serine 53, and tyrosine 124 each bind Fe-coproporphyrin III. Residues histidine 182 and glutamate 263 each coordinate Fe(2+).

Belongs to the ferrochelatase family.

Its subcellular location is the cytoplasm. It carries out the reaction Fe-coproporphyrin III + 2 H(+) = coproporphyrin III + Fe(2+). The protein operates within porphyrin-containing compound metabolism; protoheme biosynthesis. Involved in coproporphyrin-dependent heme b biosynthesis. Catalyzes the insertion of ferrous iron into coproporphyrin III to form Fe-coproporphyrin III. This is Coproporphyrin III ferrochelatase from Listeria monocytogenes serotype 4b (strain F2365).